Here is a 158-residue protein sequence, read N- to C-terminus: UPF0725 protein At3g57210 (158 aa).

This sequence belongs to the UPF0725 (EMB2204) family.

The chain is UPF0725 protein At3g57210 from Arabidopsis thaliana (Mouse-ear cress).